A 394-amino-acid chain; its full sequence is 8-amino-7-oxononanoate synthase (394 aa).

Arginine 21 lines the substrate pocket. 112–113 (GY) contributes to the pyridoxal 5'-phosphate binding site. Histidine 137 contacts substrate. Residues serine 183, histidine 211, and threonine 239 each contribute to the pyridoxal 5'-phosphate site. Lysine 242 is subject to N6-(pyridoxal phosphate)lysine. Threonine 358 is a binding site for substrate.

It belongs to the class-II pyridoxal-phosphate-dependent aminotransferase family. BioF subfamily. In terms of assembly, homodimer. Pyridoxal 5'-phosphate serves as cofactor.

It catalyses the reaction 6-carboxyhexanoyl-[ACP] + L-alanine + H(+) = (8S)-8-amino-7-oxononanoate + holo-[ACP] + CO2. It functions in the pathway cofactor biosynthesis; biotin biosynthesis. Functionally, catalyzes the decarboxylative condensation of pimeloyl-[acyl-carrier protein] and L-alanine to produce 8-amino-7-oxononanoate (AON), [acyl-carrier protein], and carbon dioxide. The protein is 8-amino-7-oxononanoate synthase of Burkholderia pseudomallei (strain 1710b).